Consider the following 123-residue polypeptide: Holo-[acyl-carrier-protein] synthase (123 aa).

The Mg(2+) site is built by Asp-8 and Glu-56.

The protein belongs to the P-Pant transferase superfamily. AcpS family. Mg(2+) serves as cofactor.

It is found in the cytoplasm. It carries out the reaction apo-[ACP] + CoA = holo-[ACP] + adenosine 3',5'-bisphosphate + H(+). Its function is as follows. Transfers the 4'-phosphopantetheine moiety from coenzyme A to a Ser of acyl-carrier-protein. This Clostridium botulinum (strain Alaska E43 / Type E3) protein is Holo-[acyl-carrier-protein] synthase.